The following is a 607-amino-acid chain: Protease Do-like 2, chloroplastic (607 aa).

The disordered stretch occupies residues 41 to 104 (SSNIKRKSSR…LSDFSRDQQT (64 aa)). Residues 87–104 (PKKEKKESLSDFSRDQQT) are compositionally biased toward basic and acidic residues. The interval 118–317 (VVKVYCTHTA…LTDYERNGKY (200 aa)) is serine protease. Active-site charge relay system residues include H159, D190, and S268. The region spanning 308–403 (LTDYERNGKY…YLISQKFAGD (96 aa)) is the PDZ domain.

Belongs to the peptidase S1C family.

It is found in the plastid. It localises to the chloroplast thylakoid membrane. Serine protease that performs the primary cleavage of the photodamaged D1 protein in plant photosystem II. This chain is Protease Do-like 2, chloroplastic (DEGP2), found in Arabidopsis thaliana (Mouse-ear cress).